Here is a 395-residue protein sequence, read N- to C-terminus: Transcriptional coactivator yorkie (395 aa).

Residues 73 to 100 form a disordered region; that stretch reads NSFFTPPAPSHSRANSADSTYDAGSQSS. A phosphoserine mark is found at Ser82, Ser88, Ser100, Ser117, and Ser145. The segment covering 84-100 has biased composition (polar residues); it reads SRANSADSTYDAGSQSS. Disordered regions lie at residues 129–150 and 162–199; these read PSPQ…PASL and AAAA…PASS. Ser146 carries the post-translational modification Phosphoserine; by CDK7. Ser149 carries the post-translational modification Phosphoserine. The segment covering 162–179 has biased composition (low complexity); the sequence is AAAANNPNANPSSQQQPA. Ser227 carries the post-translational modification Phosphoserine. Residue Tyr228 is modified to Phosphotyrosine. Ser232 bears the Phosphoserine mark. WW domains are found at residues 241–274 and 310–343; these read GALP…DPRI and GPLP…DPRM.

The protein belongs to the YAP1 family. In terms of assembly, interacts (via WW domains) with wts. Interacts (via N-terminus) with sd (via C-terminus) and this interaction enhances the transcriptional activity of sd. The phosphorylated form interacts with 14-3-3epsilon and 14-3-3zeta. Interacts with Ack and ex. Its activity is regulated by multiple phosphorylation events. Phosphorylation at Ser-88, Ser-145 and Ser-227 negatively regulate its activity and restrict its nuclear localization. Wts-mediated phosphorylation at Ser-145 promotes interaction with 14-3-3epsilon and 14-3-3zeta. Phosphorylation at Ser-88 and Ser-227 regulate nuclear localization and activity independent of 14-3-3 association. Phosphorylation at Ser-146 by Cdk7 promotes its stability by preventing ubiquitination by the DCX(DCAF12) complex. In terms of processing, ubiquitinated by the DCX(DCAF12) complex, leading to its degradation. Phosphorylation at Ser-146 by Cdk7 prevents ubiquitination by the DCX(DCAF12) complex.

The protein resides in the cytoplasm. It is found in the nucleus. In terms of biological role, transcriptional coactivator which is the critical downstream regulatory target in the Hippo/SWH (Sav/Wts/Hpo) signaling pathway that plays a pivotal role in organ size control and tumor suppression by restricting proliferation and promoting apoptosis. The core of this pathway is composed of a kinase cascade wherein Hippo (Hpo), in complex with its regulatory protein Salvador (Sav), phosphorylates and activates Warts (Wts) in complex with its regulatory protein Mats, which in turn phosphorylates and inactivates the Yorkie (Yki) oncoprotein. The Hippo/SWH signaling pathway inhibits the activity of the transcriptional complex formed by Scalloped (sd) and Yki and the target genes of this pathway include cyclin-E (cycE), diap1 and bantam. Regulates the expression of G1/S-specific CycE and diap1, thereby promoting cell proliferation and inhibiting apoptosis. Required for transcriptional activity of sd in wing imaginal disks. Induces expression of expression of vestigial (vg) in wing and haltere disks and the expression of transcription factor E2f (E2f). This chain is Transcriptional coactivator yorkie (yki), found in Drosophila melanogaster (Fruit fly).